A 348-amino-acid polypeptide reads, in one-letter code: Sulfate/thiosulfate import ATP-binding protein CysA (348 aa).

In terms of domain architecture, ABC transporter spans 3-237 (IRIQELCKQF…PSSPFVYSFV (235 aa)). 35-42 (GPSGSGKT) is a binding site for ATP.

Belongs to the ABC transporter superfamily. Sulfate/tungstate importer (TC 3.A.1.6) family. As to quaternary structure, the complex is composed of two ATP-binding proteins (CysA), two transmembrane proteins (CysT and CysW) and a solute-binding protein (CysP).

It localises to the cell inner membrane. The catalysed reaction is sulfate(out) + ATP + H2O = sulfate(in) + ADP + phosphate + H(+). It catalyses the reaction thiosulfate(out) + ATP + H2O = thiosulfate(in) + ADP + phosphate + H(+). In terms of biological role, part of the ABC transporter complex CysAWTP involved in sulfate/thiosulfate import. Responsible for energy coupling to the transport system. The sequence is that of Sulfate/thiosulfate import ATP-binding protein CysA from Xylella fastidiosa (strain 9a5c).